A 421-amino-acid polypeptide reads, in one-letter code: Tryptophan synthase beta chain (421 aa).

An N6-(pyridoxal phosphate)lysine modification is found at K112.

It belongs to the TrpB family. As to quaternary structure, tetramer of two alpha and two beta chains. Pyridoxal 5'-phosphate is required as a cofactor.

It catalyses the reaction (1S,2R)-1-C-(indol-3-yl)glycerol 3-phosphate + L-serine = D-glyceraldehyde 3-phosphate + L-tryptophan + H2O. It functions in the pathway amino-acid biosynthesis; L-tryptophan biosynthesis; L-tryptophan from chorismate: step 5/5. The beta subunit is responsible for the synthesis of L-tryptophan from indole and L-serine. In Mycobacterium bovis (strain ATCC BAA-935 / AF2122/97), this protein is Tryptophan synthase beta chain (trpB).